The following is a 115-amino-acid chain: MMSDDIVLPLQFTDAAANKVKILVSDEENPNLRLRVYITGGGCSGFQYGFTFDDQINEGDMTIEKQGVELVVDPMSLQYLVGGCVDYTEGLEGSRFIVTNPNAKTTCGCGSSFSI.

Cysteine 43, cysteine 107, and cysteine 109 together coordinate iron-sulfur cluster.

It belongs to the HesB/IscA family. In terms of assembly, homodimer. It depends on iron-sulfur cluster as a cofactor.

Its function is as follows. Required for insertion of 4Fe-4S clusters for at least IspG. The polypeptide is Iron-sulfur cluster insertion protein ErpA (Photorhabdus laumondii subsp. laumondii (strain DSM 15139 / CIP 105565 / TT01) (Photorhabdus luminescens subsp. laumondii)).